Consider the following 344-residue polypeptide: Sorting nexin-16 (344 aa).

Over residues 1 to 10 (MATPYVPVPM) the composition is skewed to pro residues. Disordered stretches follow at residues 1 to 49 (MATP…DSSV) and 83 to 105 (SIEYSARPRDTEEQHPDALNWED). A compositionally biased stretch (polar residues) spans 14-26 (NSASSFTNNRNQR). Residues 27–40 (SSSFGSVSTSSNSS) are compositionally biased toward low complexity. Basic and acidic residues predominate over residues 88–105 (ARPRDTEEQHPDALNWED). The PX domain occupies 105-218 (DRPSTPTILG…EFLCLDDPPG (114 aa)). Residues Arg-144, Thr-146, and Arg-184 each coordinate a 1,2-diacyl-sn-glycero-3-phospho-(1D-myo-inositol-3-phosphate). Phosphoserine is present on Ser-222. Positions 223-278 (LEESRAFCETLEETNYHLQRELLEKQKEVESLKKLLGEKQLHIDALETRIRTLSLE) form a coiled coil.

The protein belongs to the sorting nexin family. Homooligomer. Interacts with EGFR.

The protein localises to the early endosome membrane. It localises to the late endosome membrane. Its subcellular location is the cytoplasm. The protein resides in the lysosome. Its function is as follows. May be involved in several stages of intracellular trafficking. Plays a role in protein transport from early to late endosomes. Plays a role in protein transport to the lysosome. Promotes degradation of EGFR after EGF signaling. The protein is Sorting nexin-16 (Snx16) of Rattus norvegicus (Rat).